We begin with the raw amino-acid sequence, 333 residues long: MSNDTQPTIAIIGYGSQGRAHALNLRDSGFDVTVGLRPGGPTEAKAQADGFTVVAPAEAVKTADLVAVLTPDMVQKKLYEEVIAPNMKQGACLLFAHGLNVHFDMIKPRADLDVVLVAPKGPGALVRREYEIGRGVPCIYAVYQDTSGKAEQFALTYAGGLGGARANIIKTTFKEETETDLFGEQAVLCGGASSLVQAGFEVLVEAGYQPEIAYYEVLHELKLIVDLFYEGGITRMLEFVSETAQYGDYVSGPRVIDASTKARMKDVLTDIQNGTFTKNWVAEYEAGLPNYTKFKQADLEHPIEEVGKKLRAKMVWLNGEQQAAATPAKQQAA.

A KARI N-terminal Rossmann domain is found at 1 to 171; sequence MSNDTQPTIA…GGARANIIKT (171 aa). NADP(+) is bound by residues 14–17, arginine 37, threonine 42, and 72–75; these read YGSQ and DMVQ. The active site involves histidine 97. Position 123 (glycine 123) interacts with NADP(+). Residues 172-317 form the KARI C-terminal knotted domain; that stretch reads TFKEETETDL…KKLRAKMVWL (146 aa). Positions 180, 184, 216, and 220 each coordinate Mg(2+). Serine 241 is a binding site for substrate.

The protein belongs to the ketol-acid reductoisomerase family. It depends on Mg(2+) as a cofactor.

It carries out the reaction (2R)-2,3-dihydroxy-3-methylbutanoate + NADP(+) = (2S)-2-acetolactate + NADPH + H(+). It catalyses the reaction (2R,3R)-2,3-dihydroxy-3-methylpentanoate + NADP(+) = (S)-2-ethyl-2-hydroxy-3-oxobutanoate + NADPH + H(+). It participates in amino-acid biosynthesis; L-isoleucine biosynthesis; L-isoleucine from 2-oxobutanoate: step 2/4. The protein operates within amino-acid biosynthesis; L-valine biosynthesis; L-valine from pyruvate: step 2/4. In terms of biological role, involved in the biosynthesis of branched-chain amino acids (BCAA). Catalyzes an alkyl-migration followed by a ketol-acid reduction of (S)-2-acetolactate (S2AL) to yield (R)-2,3-dihydroxy-isovalerate. In the isomerase reaction, S2AL is rearranged via a Mg-dependent methyl migration to produce 3-hydroxy-3-methyl-2-ketobutyrate (HMKB). In the reductase reaction, this 2-ketoacid undergoes a metal-dependent reduction by NADPH to yield (R)-2,3-dihydroxy-isovalerate. This is Ketol-acid reductoisomerase (NADP(+)) from Xanthomonas campestris pv. campestris (strain 8004).